Here is a 174-residue protein sequence, read N- to C-terminus: Peptide deformylase (174 aa).

Cys96 and His138 together coordinate Fe cation. The active site involves Glu139. Fe cation is bound at residue His142.

Belongs to the polypeptide deformylase family. It depends on Fe(2+) as a cofactor.

It carries out the reaction N-terminal N-formyl-L-methionyl-[peptide] + H2O = N-terminal L-methionyl-[peptide] + formate. Removes the formyl group from the N-terminal Met of newly synthesized proteins. Requires at least a dipeptide for an efficient rate of reaction. N-terminal L-methionine is a prerequisite for activity but the enzyme has broad specificity at other positions. The chain is Peptide deformylase from Helicobacter pylori (strain J99 / ATCC 700824) (Campylobacter pylori J99).